The following is a 790-amino-acid chain: Nitrogen permease reactivator protein (790 aa).

Residues 1–68 (MSSLTRLLQE…DRNRANVPVP (68 aa)) are disordered. A compositionally biased stretch (polar residues) spans 16–38 (TSNSSPRTSADTLTTTPESQSLD). The span at 46 to 58 (SSHIGSVSNSSSS) shows a compositional bias: low complexity. Residue Ser-47 is modified to Phosphoserine; by autocatalysis. Phosphoserine occurs at positions 85, 90, 100, 111, 116, 125, 137, and 141. The span at 151-175 (RLSTTSHTSGRAIPSLSSSIPYSVP) shows a compositional bias: polar residues. 2 disordered regions span residues 151 to 188 (RLST…NSNS) and 234 to 258 (LQKA…SGSF). Over residues 176 to 188 (NSNKDNNSSNSNS) the composition is skewed to low complexity. Positions 238–248 (SMDSNNANATQ) are enriched in polar residues. Positions 249 to 258 (SRSISRSGSF) are enriched in low complexity. Phosphoserine; by autocatalysis is present on Ser-257. Residues Ser-259, Ser-260, Ser-288, Ser-292, Ser-317, Ser-320, and Ser-328 each carry the phosphoserine modification. The span at 276–289 (NSNSAGMSFSANSN) shows a compositional bias: low complexity. A disordered region spans residues 276 to 357 (NSNSAGMSFS…QSVPRSQHSS (82 aa)). Composition is skewed to polar residues over residues 290 to 305 (GPSP…NGST), 314 to 339 (RQSS…SPSS), and 346 to 357 (PSQSVPRSQHSS). Tyr-334 bears the Phosphotyrosine mark. A phosphoserine mark is found at Ser-336, Ser-353, and Ser-356. Ser-357 is subject to Phosphoserine; by autocatalysis. Ser-385 is subject to Phosphoserine. The Protein kinase domain maps to 438-742 (IKTGADLGAG…IEEIMEDPWI (305 aa)). Residues 444–452 (LGAGAGGSV) and Lys-467 each bind ATP. Residue Asp-561 is the Proton acceptor of the active site. 2 disordered regions span residues 666–704 (LVTR…NIGP) and 766–790 (HHTQ…QNNQ). Residues 677–688 (DESHSTEKKKPE) show a composition bias toward basic and acidic residues. A compositionally biased stretch (low complexity) spans 689–701 (SSSNNVSDPNNVN).

This sequence belongs to the protein kinase superfamily. Ser/Thr protein kinase family. As to quaternary structure, interacts with TIP41. Post-translationally, hyperphosphorylated in nitrogen-rich growth medium. Nitrogen limitation (or rapamycin treatment) leads to substantial, though not complete dephosphorylation. Autophosphorylation plays only a minor role and seems not to be regulated by the quality of the nitrogen source.

The protein resides in the cytoplasm. The catalysed reaction is L-seryl-[protein] + ATP = O-phospho-L-seryl-[protein] + ADP + H(+). It carries out the reaction L-threonyl-[protein] + ATP = O-phospho-L-threonyl-[protein] + ADP + H(+). Dephosphorylation by SIT4 activates NPR1 kinase activity. Its function is as follows. Nutrient-regulated protein kinase that promotes the activity of at least 6 distinct transport systems for nitrogenous nutrients under conditions of nitrogen catabolite derepression. Under poor nitrogen growth conditions, required for post-Golgi sorting of the general amino acid permease GAP1 and the three known ammonia permeases, MEP1/2/3, to the plasma membrane. Also contributes to the stability and the retention of GAP1 at the plasma membrane. Inversely, promotes the degradation of tryptophan permease TAT2 under the same conditions. Activity is regulated by the TOR signaling pathway via phosphatase SIT4. Although thought to be involved in regulation of GLN3-dependent transcription by nitrogen catabolite repression, this seems to be an indirect effect from the reduced uptake of the nitrogen-repressing compound. This chain is Nitrogen permease reactivator protein (NPR1), found in Saccharomyces cerevisiae (strain ATCC 204508 / S288c) (Baker's yeast).